A 191-amino-acid chain; its full sequence is Protein YceI (191 aa).

The first 22 residues, 1–22, serve as a signal peptide directing secretion; it reads MKKSLLGLTFASLMFSAGSAVA.

The protein belongs to the UPF0312 family. Type 1 subfamily.

Its subcellular location is the periplasm. The sequence is that of Protein YceI from Shigella boydii serotype 4 (strain Sb227).